The following is a 621-amino-acid chain: Very-long-chain aldehyde decarbonylase GL1-5 (621 aa).

Transmembrane regions (helical) follow at residues 99-119, 126-146, 186-206, 224-244, and 332-352; these read IILSGILLYLGALYVPGGQHL, GAGLIALLHAGPVEFLYYWFH, LLFSIPLIACALTGTASIIAF, FELVPSWLFTWFPPLKYLMYT, and MWPLSWLSMVLTWTYGSSFTV. One can recognise a Fatty acid hydroxylase domain in the interval 138–272; it reads VEFLYYWFHR…MPFYDYIYNT (135 aa).

This sequence belongs to the sterol desaturase family. In terms of assembly, homodimer. Expressed in panicles, developing spikelets, stamens and hulls and, at low levels, in roots, developing seeds, flag leaves and seedling shoots. Strongly expressed in the epidermal cells of anthers.

The protein localises to the endoplasmic reticulum membrane. It catalyses the reaction a long-chain fatty aldehyde + 2 NADPH + O2 + H(+) = a long-chain alkane + formate + 2 NADP(+) + H2O. In terms of biological role, aldehyde decarbonylase involved in the conversion of aldehydes to alkanes. Core component of a very-long-chain alkane synthesis complex. Required for the biosynthesis of very-long-chain fatty acids (including polyesters) in cuticles, anther tapetum and pollen exine. This Oryza sativa subsp. japonica (Rice) protein is Very-long-chain aldehyde decarbonylase GL1-5.